Consider the following 132-residue polypeptide: Small ribosomal subunit protein uS8 (132 aa).

This sequence belongs to the universal ribosomal protein uS8 family. As to quaternary structure, part of the 30S ribosomal subunit. Contacts proteins S5 and S12.

One of the primary rRNA binding proteins, it binds directly to 16S rRNA central domain where it helps coordinate assembly of the platform of the 30S subunit. The sequence is that of Small ribosomal subunit protein uS8 from Lacticaseibacillus casei (strain BL23) (Lactobacillus casei).